A 98-amino-acid chain; its full sequence is uncharacterized protein (98 aa).

The 69-residue stretch at 30-98 (KKVVPSVKIH…RRKFCRVRLE (69 aa)) folds into the MOSC domain.

This is an uncharacterized protein from Haemophilus influenzae (strain ATCC 51907 / DSM 11121 / KW20 / Rd).